A 381-amino-acid chain; its full sequence is uncharacterized protein (381 aa).

A run of 9 helical transmembrane segments spans residues 59–79 (LITL…LYYM), 84–104 (GVAP…YQTM), 147–167 (VGVN…FFMA), 190–210 (SMMA…FNTI), 222–242 (LVLL…TFSI), 250–270 (ILTN…SIYW), 284–304 (HYFM…LILA), 311–331 (LSPI…IYKF), and 344–364 (VYFF…VTSL).

The protein belongs to the CDP-alcohol phosphatidyltransferase class-I family.

Its subcellular location is the membrane. This is an uncharacterized protein from Dictyostelium discoideum (Social amoeba).